Here is a 341-residue protein sequence, read N- to C-terminus: SH3 domain-containing YSC84-like protein 1 (341 aa).

Residues 221-265 form a disordered region; sequence VNARRAAREQKKASAKLPPKPSSRPEQSSAQVQLSSGSQSSRNEY. The span at 246-264 shows a compositional bias: polar residues; sequence EQSSAQVQLSSGSQSSRNE. An SH3 domain is found at 282–341; sequence NQPIEVTALYSFEGQQPGDLNFQAGDRITVISKTDSHFDWWEGKLRGRTGIFPANYVTMN.

This sequence belongs to the SH3YL1 family. Interacts with SH3D19.

The chain is SH3 domain-containing YSC84-like protein 1 (SH3YL1) from Bos taurus (Bovine).